The primary structure comprises 1571 residues: Disco-interacting protein 2 homolog A (1571 aa).

The region spanning 9–127 is the DMAP1-binding domain; it reads EAAPLPAEVR…KRRSVLVHSS (119 aa). The interval 60-203 is disordered; it reads LQAENRIPGP…APSAAATPGA (144 aa). Over residues 86–98 the composition is skewed to basic and acidic residues; that stretch reads ASRDERFRSDVHT. Ser-94 is subject to Phosphoserine. 2 stretches are compositionally biased toward polar residues: residues 127-139 and 152-162; these read SVETYTPPDTSSA and LTSTPLQSHSS. A phosphothreonine mark is found at Thr-132 and Thr-155. A compositionally biased stretch (low complexity) spans 174 to 203; sequence SSTSSSASSTSSHPGGRPTTAPSAAATPGA. 2 short sequence motifs (PXXP motif; required for interaction with CTTN) span residues 283-286 and 307-310; these read PKRP and PNQP. A disordered region spans residues 302-327; the sequence is VQQPDPNQPKPEGSETSVLRGEPLTA.

It belongs to the DIP2 family. In terms of assembly, interacts with FSTL1; DIP2A may act as a cell surface receptor for FSTL1. Interacts (via N-terminus) with CTTN (via SH3 domain); the interaction promotes acetylation of CTTN and is required for proper synaptic transmission. Interacts with SHANK3. Low expression in all tissues tested.

Its subcellular location is the cell membrane. The protein resides in the mitochondrion. The protein localises to the cell projection. It is found in the dendritic spine. It carries out the reaction acetate + ATP + CoA = acetyl-CoA + AMP + diphosphate. In terms of biological role, catalyzes the de novo synthesis of acetyl-CoA in vitro. Promotes acetylation of CTTN, possibly by providing the acetyl donor, ensuring correct dendritic spine morphology and synaptic transmission. Binds to follistatin-related protein FSTL1 and may act as a cell surface receptor for FSTL1, contributing to AKT activation and subsequent FSTL1-induced survival and function of endothelial cells and cardiac myocytes. In Homo sapiens (Human), this protein is Disco-interacting protein 2 homolog A (DIP2A).